Consider the following 116-residue polypeptide: Putative anti-sigma factor antagonist BtrV (116 aa).

One can recognise an STAS domain in the interval 1 to 110 (MKLTMDKIDG…NSREAAAAAF (110 aa)). Ser55 is subject to Phosphoserine; by BtrW.

This sequence belongs to the anti-sigma-factor antagonist family. Interacts with BtrW. In terms of processing, phosphorylated by BtrW. Dephosphorylated by BtrU.

Possible positive regulator of sigma-B activity. Non-phosphorylated BtrV binds to BtrW, preventing its association with an unknown partner(s) that might be sigma-B. When phosphorylated, releases BtrW, which is then free to complex with and inactivate its partner. Involved in type III secretion system (T3SS). The protein is Putative anti-sigma factor antagonist BtrV (btrV) of Bordetella bronchiseptica (strain ATCC BAA-588 / NCTC 13252 / RB50) (Alcaligenes bronchisepticus).